A 216-amino-acid chain; its full sequence is Large ribosomal subunit protein uL24m (216 aa).

The transit peptide at M1–L9 directs the protein to the mitochondrion. At S24 the chain carries Phosphoserine. The KOW domain occupies L56–E89.

This sequence belongs to the universal ribosomal protein uL24 family. As to quaternary structure, component of the mitochondrial ribosome large subunit (39S) which comprises a 16S rRNA and about 50 distinct proteins.

It localises to the mitochondrion. The chain is Large ribosomal subunit protein uL24m (Mrpl24) from Mus musculus (Mouse).